Consider the following 451-residue polypeptide: Cyclin-dependent kinase 14 (451 aa).

A phosphoserine mark is found at serine 60 and serine 77. Residues 84–114 (NFKTSSTGKESPKVRRHSSPSSPTSPKFGKA) are disordered. A Phosphoserine modification is found at serine 116. One can recognise a Protein kinase domain in the interval 117 to 401 (YEKLEKLGEG…AQAALSHEYF (285 aa)). ATP contacts are provided by residues 123 to 131 (LGEGSYATV) and lysine 146. The Proton acceptor role is filled by aspartate 238.

The protein belongs to the protein kinase superfamily. CMGC Ser/Thr protein kinase family. CDC2/CDKX subfamily. As to quaternary structure, found in a complex with LRP6, CCNY and CAPRIN2 during G2/M stage; CAPRIN2 functions as a scaffold for the complex by binding to CCNY via its N terminus and to CDK14 via its C terminus. Interacts with CCNY; CCNY mediates its recruitment to the plasma membrane and promotes phosphorylation of LRP6. Interacts with CCDN3 and CDKN1A. Interacts with SEPT8. Interacts with 14-3-3 proteina YWHAB, YWHAE, YWHAH and YWHAQ.

The protein resides in the cell membrane. It localises to the cytoplasm. The protein localises to the nucleus. The catalysed reaction is L-seryl-[protein] + ATP = O-phospho-L-seryl-[protein] + ADP + H(+). The enzyme catalyses L-threonyl-[protein] + ATP = O-phospho-L-threonyl-[protein] + ADP + H(+). Serine/threonine-protein kinase activity is promoted by associated cyclins CCDN3 and CCNY and repressed by CDKN1A. Its function is as follows. Serine/threonine-protein kinase involved in the control of the eukaryotic cell cycle, whose activity is controlled by an associated cyclin. Acts as a cell-cycle regulator of Wnt signaling pathway during G2/M phase by mediating the phosphorylation of LRP6 at 'Ser-1490', leading to the activation of the Wnt signaling pathway. Acts as a regulator of cell cycle progression and cell proliferation via its interaction with CCDN3. Phosphorylates RB1 in vitro, however the relevance of such result remains to be confirmed in vivo. May also play a role in meiosis, neuron differentiation and may indirectly act as a negative regulator of insulin-responsive glucose transport. The protein is Cyclin-dependent kinase 14 (CDK14) of Plecturocebus moloch (Dusky titi monkey).